Consider the following 168-residue polypeptide: ATP synthase subunit d, mitochondrial (168 aa).

This sequence belongs to the ATPase d subunit family. F-type ATPases have 2 components, CF(1) - the catalytic core - and CF(0) - the membrane proton channel. CF(0) seems to have nine subunits: a, b, c, d, e, f, g, F6 and 8 (or A6L).

Its subcellular location is the mitochondrion. The protein resides in the mitochondrion inner membrane. Functionally, mitochondrial membrane ATP synthase (F(1)F(0) ATP synthase or Complex V) produces ATP from ADP in the presence of a proton gradient across the membrane which is generated by electron transport complexes of the respiratory chain. F-type ATPases consist of two structural domains, F(1) - containing the extramembraneous catalytic core, and F(0) - containing the membrane proton channel, linked together by a central stalk and a peripheral stalk. During catalysis, ATP synthesis in the catalytic domain of F(1) is coupled via a rotary mechanism of the central stalk subunits to proton translocation. Part of the complex F(0) domain and the peripheric stalk, which acts as a stator to hold the catalytic alpha(3)beta(3) subcomplex and subunit a/ATP6 static relative to the rotary elements. In Arabidopsis thaliana (Mouse-ear cress), this protein is ATP synthase subunit d, mitochondrial.